Here is a 115-residue protein sequence, read N- to C-terminus: Evasin P1183 (115 aa).

The N-terminal stretch at 1–25 (MTRNWSFRVIFVSAMWCALLKFATL) is a signal peptide. Cystine bridges form between C38-C58, C54-C94, C70-C99, and C89-C108. N-linked (GlcNAc...) asparagine glycans are attached at residues N45, N72, and N103.

The protein resides in the secreted. Its function is as follows. Salivary chemokine-binding protein which binds to host chemokine CCL2. The protein is Evasin P1183 of Amblyomma triste (Neotropical tick).